The primary structure comprises 119 residues: Large ribosomal subunit protein bL20 (119 aa).

The protein belongs to the bacterial ribosomal protein bL20 family.

Binds directly to 23S ribosomal RNA and is necessary for the in vitro assembly process of the 50S ribosomal subunit. It is not involved in the protein synthesizing functions of that subunit. This is Large ribosomal subunit protein bL20 from Streptococcus pyogenes serotype M1.